Consider the following 67-residue polypeptide: Histone H2A (67 aa).

An N5-methylglutamine modification is found at Q60.

The protein belongs to the histone H2A family. As to quaternary structure, the nucleosome is a histone octamer containing two molecules each of H2A, H2B, H3 and H4 assembled in one H3-H4 heterotetramer and two H2A-H2B heterodimers. The octamer wraps approximately 147 bp of DNA.

It is found in the nucleus. Its subcellular location is the chromosome. Its function is as follows. Core component of nucleosome. Nucleosomes wrap and compact DNA into chromatin, limiting DNA accessibility to the cellular machineries which require DNA as a template. Histones thereby play a central role in transcription regulation, DNA repair, DNA replication and chromosomal stability. DNA accessibility is regulated via a complex set of post-translational modifications of histones, also called histone code, and nucleosome remodeling. This Olisthodiscus luteus (Marine phytoflagellate) protein is Histone H2A.